We begin with the raw amino-acid sequence, 154 residues long: Myoglobin (154 aa).

The Globin domain occupies 2-148 (GLSDGEWQLV…FRNDMAAKYK (147 aa)). Serine 4 carries the post-translational modification Phosphoserine. Residue histidine 65 participates in nitrite binding. Histidine 65 is an O2 binding site. Residue threonine 68 is modified to Phosphothreonine. Residue histidine 94 coordinates heme b.

It belongs to the globin family. In terms of assembly, monomeric.

It localises to the cytoplasm. The protein localises to the sarcoplasm. The enzyme catalyses Fe(III)-heme b-[protein] + nitric oxide + H2O = Fe(II)-heme b-[protein] + nitrite + 2 H(+). The catalysed reaction is H2O2 + AH2 = A + 2 H2O. Functionally, monomeric heme protein which primary function is to store oxygen and facilitate its diffusion within muscle tissues. Reversibly binds oxygen through a pentacoordinated heme iron and enables its timely and efficient release as needed during periods of heightened demand. Depending on the oxidative conditions of tissues and cells, and in addition to its ability to bind oxygen, it also has a nitrite reductase activity whereby it regulates the production of bioactive nitric oxide. Under stress conditions, like hypoxia and anoxia, it also protects cells against reactive oxygen species thanks to its pseudoperoxidase activity. This Macaca fascicularis (Crab-eating macaque) protein is Myoglobin (MB).